We begin with the raw amino-acid sequence, 271 residues long: 3-methyl-2-oxobutanoate hydroxymethyltransferase (271 aa).

Aspartate 44 and aspartate 83 together coordinate Mg(2+). Residues 44-45, aspartate 83, and lysine 112 each bind 3-methyl-2-oxobutanoate; that span reads DS. Glutamate 114 lines the Mg(2+) pocket. The active-site Proton acceptor is the glutamate 181.

It belongs to the PanB family. Homodecamer; pentamer of dimers. The cofactor is Mg(2+).

Its subcellular location is the cytoplasm. It carries out the reaction 3-methyl-2-oxobutanoate + (6R)-5,10-methylene-5,6,7,8-tetrahydrofolate + H2O = 2-dehydropantoate + (6S)-5,6,7,8-tetrahydrofolate. It functions in the pathway cofactor biosynthesis; coenzyme A biosynthesis. Functionally, catalyzes the reversible reaction in which hydroxymethyl group from 5,10-methylenetetrahydrofolate is transferred onto alpha-ketoisovalerate to form ketopantoate. The polypeptide is 3-methyl-2-oxobutanoate hydroxymethyltransferase (Staphylothermus marinus (strain ATCC 43588 / DSM 3639 / JCM 9404 / F1)).